Here is a 217-residue protein sequence, read N- to C-terminus: Ependymin (217 aa).

A signal peptide spans methionine 1 to alanine 20. N-linked (GlcNAc...) asparagine glycosylation is found at asparagine 73 and asparagine 96.

The protein belongs to the ependymin family. Forms disulfide-linked dimers. Binds calcium through the terminal sialic acids. EPDs are synthesized in the meninx and secreted in the cerebrospinal fluid.

The protein localises to the secreted. May play a role in neural plasticity. May be involved during axon regeneration. The chain is Ependymin (epd) from Danio rerio (Zebrafish).